The primary structure comprises 1201 residues: Autophagy-related protein 11 (1201 aa).

Residues 90–109 are disordered; it reads FPFLGRPSTPTKGSDNSTGT. Polar residues predominate over residues 97-109; that stretch reads STPTKGSDNSTGT. A coiled-coil region spans residues 418 to 452; sequence LLRSDDMVRSLRDEKSKLEEKVKGSESRIRKLEDL. Disordered stretches follow at residues 458-503 and 525-545; these read HMGR…SEEK and KLQKDAHAERQSNTDKIQEVQ. Positions 485–499 are enriched in low complexity; it reads RRSSVSSRRMSSNQS. Positions 525-542 are enriched in basic and acidic residues; it reads KLQKDAHAERQSNTDKIQ. 2 coiled-coil regions span residues 566-670 and 710-828; these read RRFL…ALQA and SAKA…WKER. Disordered stretches follow at residues 1052-1076 and 1115-1201; these read SMNGANPDRRSIGEASDGTSFDDEN and DARG…LQGP. Over residues 1133–1166 the composition is skewed to polar residues; that stretch reads RTLSKSLDSRRNSSNSKKGPATPSQRGNDSTTDL. Residues 1191 to 1201 show a composition bias toward basic and acidic residues; that stretch reads EEVRRDQLQGP.

The protein belongs to the ATG11 family. As to quaternary structure, homodimer and potential homooligomers.

The protein localises to the preautophagosomal structure membrane. Functionally, selective autophagy-specific protein required for pexophagy and mitophagy. In contrast to its Saccharomyces cerevisiae ATG11 ortholog, is not involved in non-selective autophagy nor in cytoplasm to vacuole transport (Cvt). The chain is Autophagy-related protein 11 from Aspergillus oryzae (strain ATCC 42149 / RIB 40) (Yellow koji mold).